The primary structure comprises 254 residues: Caffeoyl-CoA O-methyltransferase (254 aa).

The disordered stretch occupies residues 1 to 25 (MATTNVEENKQTQEQQPKEIKHQEV). A compositionally biased stretch (basic and acidic residues) spans 7-25 (EENKQTQEQQPKEIKHQEV). K28 contributes to the substrate binding site. Residues T70, E92, 94-95 (GV), S100, D118, and A147 contribute to the S-adenosyl-L-methionine site. D170 lines the substrate pocket. D170 contributes to the a divalent metal cation binding site. Residue D172 coordinates S-adenosyl-L-methionine. Residues D196 and N197 each coordinate a divalent metal cation. N201 contacts substrate.

The protein belongs to the class I-like SAM-binding methyltransferase superfamily. Cation-dependent O-methyltransferase family. CCoAMT subfamily. Requires a divalent metal cation as cofactor.

It carries out the reaction (E)-caffeoyl-CoA + S-adenosyl-L-methionine = (E)-feruloyl-CoA + S-adenosyl-L-homocysteine + H(+). The protein operates within aromatic compound metabolism; phenylpropanoid biosynthesis. In terms of biological role, methylates caffeoyl-CoA to feruloyl-CoA and 5-hydroxyferuloyl-CoA to sinapoyl-CoA. Plays a role in the synthesis of feruloylated polysaccharides. Involved in the reinforcement of the plant cell wall. Also involved in the responding to wounding or pathogen challenge by the increased formation of cell wall-bound ferulic acid polymers. This is Caffeoyl-CoA O-methyltransferase from Mesembryanthemum crystallinum (Common ice plant).